The following is a 164-amino-acid chain: Peroxynitrite isomerase (164 aa).

The GXWXGXG signature appears at 21–27; sequence GRWGGRG. Heme b-binding residues include Lys-130 and His-156.

Belongs to the nitrobindin family. Homodimer. It depends on heme b as a cofactor.

It carries out the reaction peroxynitrite = nitrate. Its pathway is nitrogen metabolism. Heme-binding protein able to scavenge peroxynitrite and to protect free L-tyrosine against peroxynitrite-mediated nitration, by acting as a peroxynitrite isomerase that converts peroxynitrite to nitrate. Therefore, this protein likely plays a role in peroxynitrite sensing and in the detoxification of reactive nitrogen and oxygen species (RNS and ROS, respectively). Is able to bind nitric oxide (NO) in vitro, but may act as a sensor of peroxynitrite levels in vivo. This chain is Peroxynitrite isomerase, found in Nocardioides sp. (strain ATCC BAA-499 / JS614).